A 468-amino-acid chain; its full sequence is COBRA-like protein 5 (468 aa).

Residues 1–22 (MELHRCSLLALLLAVTCSVAVA) form the signal peptide. Residues N31, N156, N164, and N228 are each glycosylated (N-linked (GlcNAc...) asparagine). The interval 251 to 278 (GGGKNARAGDGRSRRNSGGGGGHSGGTE) is disordered. N340, N355, and N374 each carry an N-linked (GlcNAc...) asparagine glycan. N443 is lipidated: GPI-anchor amidated asparagine. Residues 444–468 (SAPIGPPRSVAAAASAILVVLLLVA) constitute a propeptide, removed in mature form.

Belongs to the COBRA family. As to expression, expressed mainly in developing sclerenchyma cells and in vascular bundles.

It is found in the cell membrane. Its function is as follows. Involved in determining the orientation of cell expansion, probably by playing an important role in cellulose deposition. May act by recruiting cellulose synthesizing complexes to discrete positions on the cell surface. The chain is COBRA-like protein 5 (BC1) from Oryza sativa subsp. indica (Rice).